The following is a 110-amino-acid chain: Large ribosomal subunit protein uL22 (110 aa).

This sequence belongs to the universal ribosomal protein uL22 family. As to quaternary structure, part of the 50S ribosomal subunit.

In terms of biological role, this protein binds specifically to 23S rRNA; its binding is stimulated by other ribosomal proteins, e.g. L4, L17, and L20. It is important during the early stages of 50S assembly. It makes multiple contacts with different domains of the 23S rRNA in the assembled 50S subunit and ribosome. Its function is as follows. The globular domain of the protein is located near the polypeptide exit tunnel on the outside of the subunit, while an extended beta-hairpin is found that lines the wall of the exit tunnel in the center of the 70S ribosome. This chain is Large ribosomal subunit protein uL22, found in Leptospira borgpetersenii serovar Hardjo-bovis (strain JB197).